Consider the following 363-residue polypeptide: Histone-lysine N-methyltransferase ASHH3 (363 aa).

Residues Asp63–His114 form the AWS domain. Positions Lys116–Gln233 constitute an SET domain. In terms of domain architecture, Post-SET spans Ala239–Gly255.

The protein belongs to the class V-like SAM-binding methyltransferase superfamily. Histone-lysine methyltransferase family. SET2 subfamily.

The protein localises to the nucleus. It is found in the chromosome. It localises to the centromere. The enzyme catalyses L-lysyl-[histone] + S-adenosyl-L-methionine = N(6)-methyl-L-lysyl-[histone] + S-adenosyl-L-homocysteine + H(+). In terms of biological role, histone methyltransferase. The polypeptide is Histone-lysine N-methyltransferase ASHH3 (ASHH3) (Arabidopsis thaliana (Mouse-ear cress)).